The chain runs to 145 residues: UPF0179 protein TV1250 (145 aa).

This sequence belongs to the UPF0179 family.

In Thermoplasma volcanium (strain ATCC 51530 / DSM 4299 / JCM 9571 / NBRC 15438 / GSS1), this protein is UPF0179 protein TV1250.